We begin with the raw amino-acid sequence, 79 residues long: Short neurotoxin 3 (79 aa).

Positions 1-21 (MKTLLLTLVMVTIMCLDLGYT) are cleaved as a signal peptide. 4 disulfides stabilise this stretch: Cys-24-Cys-41, Cys-34-Cys-59, Cys-63-Cys-71, and Cys-72-Cys-77.

It belongs to the three-finger toxin family. Short-chain subfamily. Type III alpha-neurotoxin sub-subfamily. As to expression, expressed by the venom gland.

The protein resides in the secreted. Binds with high affinity to muscle nicotinic acetylcholine receptor (nAChR) and hinders acetylcholine binding to the receptor, thereby impairing neuromuscular transmission. Competes with the binding of alpha-bungarotoxin on muscle AChR (from Torpedo) with an IC(50) of 0.30 uM. Causes muscle paralysis, spasms and increased respiration. In Pseudonaja textilis (Eastern brown snake), this protein is Short neurotoxin 3.